A 1039-amino-acid chain; its full sequence is FERM domain-containing protein 4A (1039 aa).

Residues 20-322 (RRCQVHLLDD…SQHQFYLDRK (303 aa)) form the FERM domain. A necessary for interaction with CYTH1 region spans residues 358-420 (KGKIISGSSG…KLCLREAELT (63 aa)). The segment covering 366–382 (SGSLLSSGSQESDSSQS) has biased composition (low complexity). The tract at residues 366 to 386 (SGSLLSSGSQESDSSQSAKKD) is disordered. A coiled-coil region spans residues 382–416 (SAKKDMLAALKSRQEALEETLRQRLEELKKLCLRE). The residue at position 530 (Ser530) is a Phosphoserine. The interval 553 to 680 (DEDSQVTSTI…MPSTPDLRVR (128 aa)) is disordered. A compositionally biased stretch (pro residues) spans 571–586 (GLPPRPPSHNRPPPPQ). The segment at 579 to 939 (HNRPPPPQSL…QWYQRSTASH (361 aa)) is necessary for tight junction and adherens junction localization; Requires for interaction with PARD3. Phosphoserine is present on residues Ser604 and Ser615. The segment covering 623–638 (VKKRSSHSHSSSHKRF) has biased composition (basic residues). Phosphoserine is present on residues Ser681 and Ser711. Disordered stretches follow at residues 713-756 (ESQG…HSSS) and 772-813 (AEDS…AGGA). Over residues 788 to 800 (RAAGALGSASSGS) the composition is skewed to low complexity. Residues Ser800, Ser872, and Ser901 each carry the phosphoserine modification. Disordered regions lie at residues 879-968 (FKES…STFV) and 980-1039 (CKAT…STDE). Residues 896–905 (LTPSRSQILR) are compositionally biased toward polar residues. Residues 912-929 (EGAHDKGAGRAAVSDELR) show a composition bias toward basic and acidic residues. Residues 946–966 (SHTSSTSSDSGSQYSTSSQST) are compositionally biased toward low complexity. 2 stretches are compositionally biased toward polar residues: residues 986-1000 (ALPQ…SSEI) and 1013-1023 (TWQTGEATENS).

As to quaternary structure, interacts (via coiled-coil domain) with CYTH1 (via coiled-coil domain). Interacts with PARD3 (via coiled-coil domain). Found in a complex with PARD3, CYTH1 and FRMD4A. Interacts with CYTH2. Interacts with CYTH3.

The protein resides in the cytoplasm. The protein localises to the cytoskeleton. Its subcellular location is the cell junction. It localises to the adherens junction. It is found in the tight junction. Scaffolding protein that regulates epithelial cell polarity by connecting ARF6 activation with the PAR3 complex. Plays a redundant role with FRMD4B in epithelial polarization. May regulate MAPT secretion by activating ARF6-signaling. In Homo sapiens (Human), this protein is FERM domain-containing protein 4A.